Reading from the N-terminus, the 728-residue chain is MSNHIDRDVINALIAGHFADPFSVLGMHRTDAGLEVRALLPDATDVWVIEPKTGRKVGKLECLDSRGFFSGVLPRRKNAFRYQLAVTWHGQQNLIDDPYRFGPLLQDLDVWLLSEGTHLRPYETLGAHAATMDGVTGTRFSVWAPNARRVSVVGQFNYWDGRRHPMRFRKESGIWELFVPGAHNGQLYKFELIDAHGNLRVKADPYAFESQMRPESASLICDLPPKVEQPADRRAANQFDAPISIYEVHLGSWRRHTDNNFWLSYRELADQLVPYAKWMGFTHLELLPVNEHPFDGSWGYQPTGLYAPTRRFGTRDDFRYFINAAHAAGLNVILDWVPGHFPADDFALASFDGTSLYEHSDPREGYHQDWNTLIYNYGRREVSNYLVGNALYWIERFGIDALRVDAVASMIYRDYSRKAGEWIPNEYGGRENLEAIEFLRNTNRILGEQTPGAVTMAEESTDFAGVTRPPAGGGLGFWFKWNLGWMHDTLDYMKLDPVHRRYHHDKMTFGMLYNYTENFVLPLSHDEVVHGKKSILDRMPGDAWQKFANLRAYYGWLFAFPGKKLLFMGNEFAQGREWNHDVSLDWHLLEGGDNWHHGVQRLVRDLNHTYRHHKALHELDFDPYGFEWLVVDDHERSVFVFVRRDRAGNEIIVASNFTPVPRHDYRFGINQPGRWREALNTDSMHYHGSNQGNGGVVESDAIASHGREHSLSLTLPPLATIWLVREAQ.

The Nucleophile role is filled by aspartate 405. The active-site Proton donor is the glutamate 458.

The protein belongs to the glycosyl hydrolase 13 family. GlgB subfamily. As to quaternary structure, monomer.

The catalysed reaction is Transfers a segment of a (1-&gt;4)-alpha-D-glucan chain to a primary hydroxy group in a similar glucan chain.. It participates in glycan biosynthesis; glycogen biosynthesis. Its function is as follows. Catalyzes the formation of the alpha-1,6-glucosidic linkages in glycogen by scission of a 1,4-alpha-linked oligosaccharide from growing alpha-1,4-glucan chains and the subsequent attachment of the oligosaccharide to the alpha-1,6 position. In Klebsiella pneumoniae subsp. pneumoniae (strain ATCC 700721 / MGH 78578), this protein is 1,4-alpha-glucan branching enzyme GlgB.